Reading from the N-terminus, the 247-residue chain is Ubiquinone biosynthesis O-methyltransferase (247 aa).

The S-adenosyl-L-methionine site is built by Arg-39, Gly-70, Asp-91, and Met-134.

It belongs to the methyltransferase superfamily. UbiG/COQ3 family.

It catalyses the reaction a 3-demethylubiquinol + S-adenosyl-L-methionine = a ubiquinol + S-adenosyl-L-homocysteine + H(+). The catalysed reaction is a 3-(all-trans-polyprenyl)benzene-1,2-diol + S-adenosyl-L-methionine = a 2-methoxy-6-(all-trans-polyprenyl)phenol + S-adenosyl-L-homocysteine + H(+). The protein operates within cofactor biosynthesis; ubiquinone biosynthesis. Its function is as follows. O-methyltransferase that catalyzes the 2 O-methylation steps in the ubiquinone biosynthetic pathway. This Cereibacter sphaeroides (strain KD131 / KCTC 12085) (Rhodobacter sphaeroides) protein is Ubiquinone biosynthesis O-methyltransferase.